The following is a 265-amino-acid chain: MICOS complex subunit Mic27 (265 aa).

The transit peptide at 1–27 (MAAFRMGKLTTIPAGLIYASINVRLAK) directs the protein to the mitochondrion. Over 28–110 (EEEPKKQLVR…YVYLKNPPQD (83 aa)) the chain is Mitochondrial intermembrane. The helical transmembrane segment at 111-129 (FLPKMGVITASGLAGLLSA) threads the bilayer. Residues 130-137 (RKGSRFKK) are Mitochondrial matrix-facing. The helical transmembrane segment at 138 to 155 (IAYPLGLATLGATVCYPA) threads the bilayer. Residues 156 to 265 (QSVIIAKITG…DDKDMYSTRS (110 aa)) are Mitochondrial intermembrane-facing. Disordered regions lie at residues 187-215 (SENESLPEPKEESKEGRSDEIHASLPDLK) and 229-265 (VIKSESTSGTTQFIPDPKLMDHGQSHPDDKDMYSTRS). Serine 204 bears the Phosphoserine mark. The span at 229–241 (VIKSESTSGTTQF) shows a compositional bias: polar residues. A compositionally biased stretch (basic and acidic residues) spans 246-265 (KLMDHGQSHPDDKDMYSTRS).

Belongs to the apolipoprotein O/MICOS complex subunit Mic27 family. Component of the mitochondrial contact site and cristae organizing system (MICOS) complex, composed of at least MICOS10/MIC10, CHCHD3/MIC19, CHCHD6/MIC25, APOOL/MIC27, IMMT/MIC60, APOO/MIC23/MIC26 and MICOS13/MIC13. This complex was also known under the names MINOS or MitOS complex. The MICOS complex associates with mitochondrial outer membrane proteins SAMM50, MTX1 and MTX2 (together described as components of the mitochondrial outer membrane sorting assembly machinery (SAM) complex) and DNAJC11, mitochondrial inner membrane protein TMEM11 and with HSPA9. The MICOS and SAM complexes together with DNAJC11 are part of a large protein complex spanning both membranes termed the mitochondrial intermembrane space bridging (MIB) complex. Interacts with MICOS10/MIC10, IMMT/MIC60 and APOO/MIC23/MIC26.

It is found in the mitochondrion inner membrane. Its subcellular location is the mitochondrion. Component of the MICOS complex, a large protein complex of the mitochondrial inner membrane that plays crucial roles in the maintenance of crista junctions, inner membrane architecture, and formation of contact sites to the outer membrane. Specifically binds to cardiolipin (in vitro) but not to the precursor lipid phosphatidylglycerol. Plays a crucial role in crista junction formation and mitochondrial function. In Mus musculus (Mouse), this protein is MICOS complex subunit Mic27 (Apool).